A 249-amino-acid chain; its full sequence is Leucyl/phenylalanyl-tRNA--protein transferase (249 aa).

Residues 1-21 (MSRTLPHLLSSDPASPFPPAE) are disordered.

The protein belongs to the L/F-transferase family.

It is found in the cytoplasm. It catalyses the reaction N-terminal L-lysyl-[protein] + L-leucyl-tRNA(Leu) = N-terminal L-leucyl-L-lysyl-[protein] + tRNA(Leu) + H(+). The catalysed reaction is N-terminal L-arginyl-[protein] + L-leucyl-tRNA(Leu) = N-terminal L-leucyl-L-arginyl-[protein] + tRNA(Leu) + H(+). It carries out the reaction L-phenylalanyl-tRNA(Phe) + an N-terminal L-alpha-aminoacyl-[protein] = an N-terminal L-phenylalanyl-L-alpha-aminoacyl-[protein] + tRNA(Phe). Functionally, functions in the N-end rule pathway of protein degradation where it conjugates Leu, Phe and, less efficiently, Met from aminoacyl-tRNAs to the N-termini of proteins containing an N-terminal arginine or lysine. The chain is Leucyl/phenylalanyl-tRNA--protein transferase from Xanthomonas campestris pv. campestris (strain 8004).